Consider the following 123-residue polypeptide: Small ribosomal subunit protein uS13 (123 aa).

The interval 93-123 (HRKGLPVRGQNTKNNARTRKGPAKAIAGKKK) is disordered. Positions 108 to 123 (ARTRKGPAKAIAGKKK) are enriched in basic residues.

It belongs to the universal ribosomal protein uS13 family. Part of the 30S ribosomal subunit. Forms a loose heterodimer with protein S19. Forms two bridges to the 50S subunit in the 70S ribosome.

Functionally, located at the top of the head of the 30S subunit, it contacts several helices of the 16S rRNA. In the 70S ribosome it contacts the 23S rRNA (bridge B1a) and protein L5 of the 50S subunit (bridge B1b), connecting the 2 subunits; these bridges are implicated in subunit movement. Contacts the tRNAs in the A and P-sites. The sequence is that of Small ribosomal subunit protein uS13 from Leuconostoc mesenteroides subsp. mesenteroides (strain ATCC 8293 / DSM 20343 / BCRC 11652 / CCM 1803 / JCM 6124 / NCDO 523 / NBRC 100496 / NCIMB 8023 / NCTC 12954 / NRRL B-1118 / 37Y).